Consider the following 200-residue polypeptide: Prostamide/prostaglandin F synthase (200 aa).

Belongs to the peroxiredoxin-like PRXL2 family. Prostamide/prostaglandin F synthase subfamily.

Its subcellular location is the cytoplasm. The protein localises to the cytosol. The catalysed reaction is prostaglandin H2 + [thioredoxin]-dithiol = prostaglandin F2alpha + [thioredoxin]-disulfide. The enzyme catalyses prostamide F2alpha + [thioredoxin]-disulfide = prostamide H2 + [thioredoxin]-dithiol. Functionally, catalyzes the reduction of prostaglandin-ethanolamide H(2) (prostamide H(2)) to prostamide F(2alpha) with NADPH as proton donor. Also able to reduce prostaglandin H(2) to prostaglandin F(2alpha). This chain is Prostamide/prostaglandin F synthase (prxl2b), found in Salmo salar (Atlantic salmon).